A 761-amino-acid chain; its full sequence is MTSVLRGVLKTHLPRTLTLPRCARNFQTTTFLRNEQVKLPQTYDEEKVIIDEINENLKPDDLQASTRLRNIGISAHIDSGKTTFTERVLFYTGRIKAIHEVRGKDSVGAKMDHMDLEREKGITIQSAATYCSWDKDDKSYHFNLIDTPGHIDFTIEVERALRVLDGAVLVVCAVAGVQSQTVTVDRQMRRYNVPRVTFINKMDRMGANPWRAIEQINAKLKIPAAAIQVPIGAEENLQGVVNIIDRVALYNEGSQGETIRKAEIPEDLKELVEEKRALLIETLADVDEEMADIYLEGEEPTVEQIKSAIRRATIGRKFTPVLMGSALANRGIQSVLDSVVDYLPQPNEVLNTGLELQKDGSEKPVHLTPSSSEPFVGLAFKLEEGPYGQLTYIRVYQGKLKKGAYMTHVKTGKKVKVSRLVRMHSNDMEDVAEVGAGEICATFGIDCASGDTFIGQGTQQQITMSSMFVPEAVISLSISPKTKDNGAFSKAMNRFQKEDPTFRVHYDSESKETIISGMGELHLEIYVERIKREYGVDCITGKPQVSYREAITVPSAFDYTHKKQSGGAGQYGRVIGEMNPIESENKFETQIIGGKIPEKFLFACSKGFEDCLEKGPLIGHRVLGVHMLINDGQTHVVDSSELAFRTATHGAFKQAFLNAQPVILEPIMSVEVTAPNEFQGSVVGLINKLGGMINDTVNGPDDFTVTAECSLNSMFGFSTSLRASTQGKGEFSLEFLKYSPTAPQVQKQLIQEYQKAQAAKK.

The transit peptide at 1–33 (MTSVLRGVLKTHLPRTLTLPRCARNFQTTTFLR) directs the protein to the mitochondrion. One can recognise a tr-type G domain in the interval 66-347 (TRLRNIGISA…SVVDYLPQPN (282 aa)). Residues 75–82 (AHIDSGKT), 146–150 (DTPGH), and 200–203 (NKMD) contribute to the GTP site.

It belongs to the TRAFAC class translation factor GTPase superfamily. Classic translation factor GTPase family. EF-G/EF-2 subfamily.

It is found in the mitochondrion. Its pathway is protein biosynthesis; polypeptide chain elongation. Functionally, mitochondrial GTPase that catalyzes the GTP-dependent ribosomal translocation step during translation elongation. During this step, the ribosome changes from the pre-translocational (PRE) to the post-translocational (POST) state as the newly formed A-site-bound peptidyl-tRNA and P-site-bound deacylated tRNA move to the P and E sites, respectively. Catalyzes the coordinated movement of the two tRNA molecules, the mRNA and conformational changes in the ribosome. This Candida dubliniensis (strain CD36 / ATCC MYA-646 / CBS 7987 / NCPF 3949 / NRRL Y-17841) (Yeast) protein is Elongation factor G, mitochondrial.